The following is a 175-amino-acid chain: uncharacterized protein (175 aa).

The 148-residue stretch at 10–157 (LFELYAELIH…AERLFRDLVT (148 aa)) folds into the HTH marR-type domain. The H-T-H motif DNA-binding region spans 68–91 (VTSIAEKMNTTKATVSRISTKLLG).

It localises to the cytoplasm. This is an uncharacterized protein from Bacillus subtilis (strain 168).